The chain runs to 211 residues: Protein-L-isoaspartate O-methyltransferase (211 aa).

Ser-60 is an active-site residue.

It belongs to the methyltransferase superfamily. L-isoaspartyl/D-aspartyl protein methyltransferase family.

It is found in the cytoplasm. It carries out the reaction [protein]-L-isoaspartate + S-adenosyl-L-methionine = [protein]-L-isoaspartate alpha-methyl ester + S-adenosyl-L-homocysteine. In terms of biological role, catalyzes the methyl esterification of L-isoaspartyl residues in peptides and proteins that result from spontaneous decomposition of normal L-aspartyl and L-asparaginyl residues. It plays a role in the repair and/or degradation of damaged proteins. The chain is Protein-L-isoaspartate O-methyltransferase from Pseudomonas fluorescens (strain Pf0-1).